A 94-amino-acid polypeptide reads, in one-letter code: Integration host factor subunit beta (94 aa).

This sequence belongs to the bacterial histone-like protein family. Heterodimer of an alpha and a beta chain.

This protein is one of the two subunits of integration host factor, a specific DNA-binding protein that functions in genetic recombination as well as in transcriptional and translational control. In Salmonella arizonae (strain ATCC BAA-731 / CDC346-86 / RSK2980), this protein is Integration host factor subunit beta.